The sequence spans 302 residues: Sulfate adenylyltransferase subunit 2 (302 aa).

This sequence belongs to the PAPS reductase family. CysD subfamily. Heterodimer composed of CysD, the smaller subunit, and CysN.

It carries out the reaction sulfate + ATP + H(+) = adenosine 5'-phosphosulfate + diphosphate. Its pathway is sulfur metabolism; hydrogen sulfide biosynthesis; sulfite from sulfate: step 1/3. In terms of biological role, with CysN forms the ATP sulfurylase (ATPS) that catalyzes the adenylation of sulfate producing adenosine 5'-phosphosulfate (APS) and diphosphate, the first enzymatic step in sulfur assimilation pathway. APS synthesis involves the formation of a high-energy phosphoric-sulfuric acid anhydride bond driven by GTP hydrolysis by CysN coupled to ATP hydrolysis by CysD. The protein is Sulfate adenylyltransferase subunit 2 of Methylococcus capsulatus (strain ATCC 33009 / NCIMB 11132 / Bath).